We begin with the raw amino-acid sequence, 461 residues long: Argininosuccinate lyase (461 aa).

Belongs to the lyase 1 family. Argininosuccinate lyase subfamily.

The protein resides in the cytoplasm. It catalyses the reaction 2-(N(omega)-L-arginino)succinate = fumarate + L-arginine. The protein operates within amino-acid biosynthesis; L-arginine biosynthesis; L-arginine from L-ornithine and carbamoyl phosphate: step 3/3. The protein is Argininosuccinate lyase of Aeromonas salmonicida (strain A449).